A 115-amino-acid polypeptide reads, in one-letter code: ESX-1 secretion-associated protein EspL (115 aa).

This is ESX-1 secretion-associated protein EspL from Mycobacterium tuberculosis (strain CDC 1551 / Oshkosh).